The sequence spans 418 residues: E3 ubiquitin-protein ligase pellino homolog 1 (418 aa).

One can recognise an FHA; atypical domain in the interval 13–200 (APVKYGELIV…MHPRNGFTED (188 aa)). S121 carries the phosphoserine modification. Residue T127 is modified to Phosphothreonine. Positions 311 to 399 (CGHVHGYHNW…TFHAACPFCA (89 aa)) are ring-like domain; necessary for ubiquitination of RIPK3.

Belongs to the pellino family. In terms of assembly, interacts with MAP3K7. Upon IL1B treatment, forms a complex with TRAF6, IRAK1, IRAK4 and MYD88; this complex recruits MAP3K7/TAK1, TAB1 and TAB2 to mediate NF-kappa-B activation. Direct binding of SMAD6 to PELI1 prevents the complex formation and hence negatively regulates IL1R-TLR signaling and eventually NF-kappa-B-mediated gene expression. Interacts (via atypical FHA domain) with RIPK3. Binds preferentially to the 'Thr-182' phosphorylated form of RIPK3. Interacts with RIPK1. Post-translationally, phosphorylation by IRAK1 and IRAK4 enhances its E3 ligase activity. Phosphorylated by ATM in response to DNA damage, promoting localization to DNA double-strand breaks (DSBs) and ability to mediate 'Lys-63'-linked ubiquitination of NBN. Sumoylated.

It is found in the chromosome. The catalysed reaction is S-ubiquitinyl-[E2 ubiquitin-conjugating enzyme]-L-cysteine + [acceptor protein]-L-lysine = [E2 ubiquitin-conjugating enzyme]-L-cysteine + N(6)-ubiquitinyl-[acceptor protein]-L-lysine.. Its pathway is protein modification; protein ubiquitination. E3 ubiquitin ligase catalyzing the covalent attachment of ubiquitin moieties onto substrate proteins. Involved in the TLR and IL-1 signaling pathways via interaction with the complex containing IRAK kinases and TRAF6. Acts as a positive regulator of inflammatory response in microglia through activation of NF-kappa-B and MAP kinase. Mediates 'Lys-63'-linked polyubiquitination of IRAK1 allowing subsequent NF-kappa-B activation. Conjugates 'Lys-63'-linked ubiquitin chains to the adapter protein ASC/PYCARD, which in turn is crucial for NLRP3 inflammasome activation. Mediates 'Lys-48'-linked polyubiquitination of RIPK3 leading to its subsequent proteasome-dependent degradation; preferentially recognizes and mediates the degradation of the 'Thr-182' phosphorylated form of RIPK3. Negatively regulates necroptosis by reducing RIPK3 expression. Mediates 'Lys-63'-linked ubiquitination of RIPK1. Following phosphorylation by ATM, catalyzes 'Lys-63'-linked ubiquitination of NBN, promoting DNA repair via homologous recombination. Negatively regulates activation of the metabolic mTORC1 signaling pathway by mediating 'Lys-63'-linked ubiquitination of mTORC1-inhibitory protein TSC1 and thereby promoting TSC1/TSC2 complex stability. This Mus musculus (Mouse) protein is E3 ubiquitin-protein ligase pellino homolog 1 (Peli1).